The primary structure comprises 98 residues: MHKITPFLIAAVVAVIVLAVWLFKKDNKKETWFSRDLNYGKANSKIWNATVAKGLKGIANENAEIRKMYPYLGYGDFTGAICKGPNNQGCTYYANYTR.

A hydrophobic region spans residues 3–23; that stretch reads KITPFLIAAVVAVIVLAVWLF.

Interacts with the major capsid protein.

It is found in the virion. One of the minor capsid proteins that constitute a network internal to the major capsid proteins and outside the lipid membrane. The minor capsid protein P13 does not serve a cross-linking function between neighboring capsomers, it may play a role in the viral capsid assembly. This Chlorella (PBCV-1) protein is Minor capsid protein P13.